The primary structure comprises 206 residues: Ras-related protein Ral-B (206 aa).

Residue 21 to 29 participates in GTP binding; that stretch reads GSGGVGKSA. Residues 43 to 51 carry the Effector region motif; that stretch reads YEPTKADSY. GTP contacts are provided by residues 68–72, 128–131, and 158–160; these read DTAGQ, NKSD, and SAK. Positions 181-206 are disordered; that stretch reads MSENKDKNGRKSSKSKKSFKERCCLL. Cys-203 is modified (cysteine methyl ester). Cys-203 carries the S-geranylgeranyl cysteine lipid modification. A propeptide spans 204–206 (removed in mature form); it reads CLL.

Belongs to the small GTPase superfamily. Ras family. As to quaternary structure, interacts with EXOC2/Sec5 and EXOC8/Exo84. Interacts (via effector domain) with RALBP1. Prenylation is essential for membrane localization. Post-translationally, the farnesylated form confers resistance to the proapoptotic and anti-anchorage-dependent growth effects of some geranylgeranyltransferase I inhibitors.

It is found in the cell membrane. The protein localises to the midbody. It catalyses the reaction GTP + H2O = GDP + phosphate + H(+). Alternates between an inactive form bound to GDP and an active form bound to GTP. Activated by a guanine nucleotide-exchange factor (GEF) and inactivated by a GTPase-activating protein (GAP). In terms of biological role, multifunctional GTPase involved in a variety of cellular processes including gene expression, cell migration, cell proliferation, oncogenic transformation and membrane trafficking. Accomplishes its multiple functions by interacting with distinct downstream effectors. Acts as a GTP sensor for GTP-dependent exocytosis of dense core vesicles. Required both to stabilize the assembly of the exocyst complex and to localize functional exocyst complexes to the leading edge of migrating cells. Required for suppression of apoptosis. In late stages of cytokinesis, upon completion of the bridge formation between dividing cells, mediates exocyst recruitment to the midbody to drive abscission. Involved in ligand-dependent receptor mediated endocytosis of the EGF and insulin receptors. The chain is Ras-related protein Ral-B (Ralb) from Mus musculus (Mouse).